The sequence spans 249 residues: Small ribosomal subunit protein uS2 (249 aa).

The protein belongs to the universal ribosomal protein uS2 family.

This is Small ribosomal subunit protein uS2 from Polynucleobacter necessarius subsp. necessarius (strain STIR1).